Consider the following 768-residue polypeptide: DNA ligase (768 aa).

Residues 30 to 34, 79 to 80, and Glu190 contribute to the NAD(+) site; these read DAEYD and SL. The active-site N6-AMP-lysine intermediate is Lys192. NAD(+) contacts are provided by Arg213, Glu250, Lys367, and Lys391. Residues Cys485, Cys488, Cys503, and Cys509 each contribute to the Zn(2+) site. The BRCT domain maps to 678 to 767; sequence AAEQPLSGLS…IPPEIQARMQ (90 aa).

It belongs to the NAD-dependent DNA ligase family. LigA subfamily. Requires Mg(2+) as cofactor. Mn(2+) serves as cofactor.

The enzyme catalyses NAD(+) + (deoxyribonucleotide)n-3'-hydroxyl + 5'-phospho-(deoxyribonucleotide)m = (deoxyribonucleotide)n+m + AMP + beta-nicotinamide D-nucleotide.. Functionally, DNA ligase that catalyzes the formation of phosphodiester linkages between 5'-phosphoryl and 3'-hydroxyl groups in double-stranded DNA using NAD as a coenzyme and as the energy source for the reaction. It is essential for DNA replication and repair of damaged DNA. In Magnetococcus marinus (strain ATCC BAA-1437 / JCM 17883 / MC-1), this protein is DNA ligase.